Here is a 336-residue protein sequence, read N- to C-terminus: Isopentenyl-diphosphate delta-isomerase (336 aa).

Residue Arg5 to Lys6 participates in substrate binding. Residues Ala60–Thr62, Ser90, and Asn117 each bind FMN. Residue Gln147 coordinates substrate. Glu148 lines the Mg(2+) pocket. FMN-binding positions include Lys179, Ser204, Thr209, Gly253–Arg255, and Ser274–Arg275.

This sequence belongs to the IPP isomerase type 2 family. In terms of assembly, homooctamer. Dimer of tetramers. It depends on FMN as a cofactor. The cofactor is NADPH. Requires Mg(2+) as cofactor.

It localises to the cytoplasm. The catalysed reaction is isopentenyl diphosphate = dimethylallyl diphosphate. Its function is as follows. Involved in the biosynthesis of isoprenoids. Catalyzes the 1,3-allylic rearrangement of the homoallylic substrate isopentenyl (IPP) to its allylic isomer, dimethylallyl diphosphate (DMAPP). This is Isopentenyl-diphosphate delta-isomerase from Streptococcus pneumoniae serotype 4 (strain ATCC BAA-334 / TIGR4).